The sequence spans 317 residues: Acetyl-coenzyme A carboxylase carboxyl transferase subunit alpha (317 aa).

Positions Lys-39–Ser-293 constitute a CoA carboxyltransferase C-terminal domain.

It belongs to the AccA family. Acetyl-CoA carboxylase is a heterohexamer composed of biotin carboxyl carrier protein (AccB), biotin carboxylase (AccC) and two subunits each of ACCase subunit alpha (AccA) and ACCase subunit beta (AccD).

The protein resides in the cytoplasm. The enzyme catalyses N(6)-carboxybiotinyl-L-lysyl-[protein] + acetyl-CoA = N(6)-biotinyl-L-lysyl-[protein] + malonyl-CoA. The protein operates within lipid metabolism; malonyl-CoA biosynthesis; malonyl-CoA from acetyl-CoA: step 1/1. Functionally, component of the acetyl coenzyme A carboxylase (ACC) complex. First, biotin carboxylase catalyzes the carboxylation of biotin on its carrier protein (BCCP) and then the CO(2) group is transferred by the carboxyltransferase to acetyl-CoA to form malonyl-CoA. The polypeptide is Acetyl-coenzyme A carboxylase carboxyl transferase subunit alpha (Azorhizobium caulinodans (strain ATCC 43989 / DSM 5975 / JCM 20966 / LMG 6465 / NBRC 14845 / NCIMB 13405 / ORS 571)).